The following is a 125-amino-acid chain: Small ribosomal subunit protein eS6 (125 aa).

Belongs to the eukaryotic ribosomal protein eS6 family. Part of the 30S ribosomal subunit.

The chain is Small ribosomal subunit protein eS6 from Thermococcus kodakarensis (strain ATCC BAA-918 / JCM 12380 / KOD1) (Pyrococcus kodakaraensis (strain KOD1)).